The sequence spans 232 residues: tRNA1(Val) (adenine(37)-N6)-methyltransferase (232 aa).

This sequence belongs to the methyltransferase superfamily. tRNA (adenine-N(6)-)-methyltransferase family.

The protein resides in the cytoplasm. It carries out the reaction adenosine(37) in tRNA1(Val) + S-adenosyl-L-methionine = N(6)-methyladenosine(37) in tRNA1(Val) + S-adenosyl-L-homocysteine + H(+). Functionally, specifically methylates the adenine in position 37 of tRNA(1)(Val) (anticodon cmo5UAC). This Haemophilus influenzae (strain 86-028NP) protein is tRNA1(Val) (adenine(37)-N6)-methyltransferase.